We begin with the raw amino-acid sequence, 203 residues long: LexA repressor (203 aa).

The segment at residues 30 to 50 (VREICQAVSLKSTSTVHGHLK) is a DNA-binding region (H-T-H motif). Catalysis depends on for autocatalytic cleavage activity residues serine 127 and lysine 164.

Belongs to the peptidase S24 family. Homodimer.

The enzyme catalyses Hydrolysis of Ala-|-Gly bond in repressor LexA.. In terms of biological role, represses a number of genes involved in the response to DNA damage (SOS response), including recA and lexA. In the presence of single-stranded DNA, RecA interacts with LexA causing an autocatalytic cleavage which disrupts the DNA-binding part of LexA, leading to derepression of the SOS regulon and eventually DNA repair. This Clostridium perfringens (strain 13 / Type A) protein is LexA repressor.